Here is a 207-residue protein sequence, read N- to C-terminus: dTTP/UTP pyrophosphatase (207 aa).

Asp79 functions as the Proton acceptor in the catalytic mechanism.

Belongs to the Maf family. YhdE subfamily. It depends on a divalent metal cation as a cofactor.

Its subcellular location is the cytoplasm. The enzyme catalyses dTTP + H2O = dTMP + diphosphate + H(+). It carries out the reaction UTP + H2O = UMP + diphosphate + H(+). Functionally, nucleoside triphosphate pyrophosphatase that hydrolyzes dTTP and UTP. May have a dual role in cell division arrest and in preventing the incorporation of modified nucleotides into cellular nucleic acids. This Rhodopseudomonas palustris (strain BisB5) protein is dTTP/UTP pyrophosphatase.